Reading from the N-terminus, the 158-residue chain is 2-C-methyl-D-erythritol 2,4-cyclodiphosphate synthase (158 aa).

Residues Asp-8 and His-10 each contribute to the a divalent metal cation site. Residues 8–10 (DVH) and 34–35 (HS) each bind 4-CDP-2-C-methyl-D-erythritol 2-phosphate. His-42 lines the a divalent metal cation pocket. 4-CDP-2-C-methyl-D-erythritol 2-phosphate-binding positions include 56–58 (DIG), 61–65 (FPDTD), 100–106 (AQRPKMA), 132–135 (TTEE), Phe-139, and Arg-142.

This sequence belongs to the IspF family. Homotrimer. Requires a divalent metal cation as cofactor.

The catalysed reaction is 4-CDP-2-C-methyl-D-erythritol 2-phosphate = 2-C-methyl-D-erythritol 2,4-cyclic diphosphate + CMP. It functions in the pathway isoprenoid biosynthesis; isopentenyl diphosphate biosynthesis via DXP pathway; isopentenyl diphosphate from 1-deoxy-D-xylulose 5-phosphate: step 4/6. In terms of biological role, involved in the biosynthesis of isopentenyl diphosphate (IPP) and dimethylallyl diphosphate (DMAPP), two major building blocks of isoprenoid compounds. Catalyzes the conversion of 4-diphosphocytidyl-2-C-methyl-D-erythritol 2-phosphate (CDP-ME2P) to 2-C-methyl-D-erythritol 2,4-cyclodiphosphate (ME-CPP) with a corresponding release of cytidine 5-monophosphate (CMP). The protein is 2-C-methyl-D-erythritol 2,4-cyclodiphosphate synthase of Pelobacter propionicus (strain DSM 2379 / NBRC 103807 / OttBd1).